The primary structure comprises 848 residues: Adenylate cyclase (848 aa).

The segment at 1-535 is catalytic; it reads MYLYIETLKQ…DVSHHFPLRL (535 aa). The regulatory stretch occupies residues 541–848; the sequence is KALYSPCEIR…DTPLLQQYFS (308 aa). At H609 the chain carries Phosphohistidine; by CRR.

It belongs to the adenylyl cyclase class-1 family.

It localises to the cytoplasm. It carries out the reaction ATP = 3',5'-cyclic AMP + diphosphate. Its activity is regulated as follows. The regulatory domain is involved in the regulation of cyclase activity by the carbon source. Activated by the PTS system, glucose-specific IIA component (CRR). In terms of biological role, catalyzes the formation of the second messenger cAMP from ATP. Its transcript is probably degraded by endoribonuclease LS (rnlA), decreasing cAMP levels and the negative regulator Crp-cAMP, which then induces its own transcription again. This is Adenylate cyclase (cyaA) from Escherichia coli (strain K12).